A 153-amino-acid chain; its full sequence is MKNNTDILIKVIKLNSNNLPLPSYSTENSSGMDLYSAMTQDVILAPGCRACINTGIAISVPNGYEAQVRPRSGLALKFGITVLNTPGTIDADYRGEIKVILINLGHETYTIKYGDRIAQMVIAPVIHASWNLVKDLDDDTTKRGDQGFGSTGI.

Substrate contacts are provided by residues 71–73, Asn-84, 88–90, and Lys-98; these read RSG and TID.

This sequence belongs to the dUTPase family. Mg(2+) serves as cofactor.

It carries out the reaction dUTP + H2O = dUMP + diphosphate + H(+). Its pathway is pyrimidine metabolism; dUMP biosynthesis; dUMP from dCTP (dUTP route): step 2/2. Functionally, this enzyme is involved in nucleotide metabolism: it produces dUMP, the immediate precursor of thymidine nucleotides and it decreases the intracellular concentration of dUTP so that uracil cannot be incorporated into DNA. The sequence is that of Deoxyuridine 5'-triphosphate nucleotidohydrolase from Ehrlichia canis (strain Jake).